The chain runs to 292 residues: uncharacterized protein (292 aa).

This is an uncharacterized protein from Acanthamoeba polyphaga (Amoeba).